The sequence spans 750 residues: Photosystem I P700 chlorophyll a apoprotein A1 (750 aa).

8 helical membrane-spanning segments follow: residues 72–95 (VFSA…FHGA), 158–181 (LYST…FHYH), 197–221 (LNHH…HVSL), 293–311 (TAHH…GHMY), 348–371 (WHAQ…HHMY), 387–413 (LSIF…IFMV), 435–457 (AIIS…LYIH), and 532–550 (FLVH…LILL). Residues C574 and C583 each contribute to the [4Fe-4S] cluster site. The next 2 membrane-spanning stretches (helical) occupy residues 590–611 (HVFL…HFSW) and 664–686 (LSAY…MFLF). Residue H675 coordinates chlorophyll a'. M683 and Y691 together coordinate chlorophyll a. Phylloquinone is bound at residue W692. The helical transmembrane segment at 724–744 (AVGVAHYLLGGIATTWAFFLA) threads the bilayer.

It belongs to the PsaA/PsaB family. The PsaA/B heterodimer binds the P700 chlorophyll special pair and subsequent electron acceptors. PSI consists of a core antenna complex that captures photons, and an electron transfer chain that converts photonic excitation into a charge separation. The eukaryotic PSI reaction center is composed of at least 11 subunits. P700 is a chlorophyll a/chlorophyll a' dimer, A0 is one or more chlorophyll a, A1 is one or both phylloquinones and FX is a shared 4Fe-4S iron-sulfur center. is required as a cofactor.

It localises to the plastid. Its subcellular location is the chloroplast thylakoid membrane. It carries out the reaction reduced [plastocyanin] + hnu + oxidized [2Fe-2S]-[ferredoxin] = oxidized [plastocyanin] + reduced [2Fe-2S]-[ferredoxin]. Functionally, psaA and PsaB bind P700, the primary electron donor of photosystem I (PSI), as well as the electron acceptors A0, A1 and FX. PSI is a plastocyanin-ferredoxin oxidoreductase, converting photonic excitation into a charge separation, which transfers an electron from the donor P700 chlorophyll pair to the spectroscopically characterized acceptors A0, A1, FX, FA and FB in turn. Oxidized P700 is reduced on the lumenal side of the thylakoid membrane by plastocyanin. This chain is Photosystem I P700 chlorophyll a apoprotein A1, found in Chlorokybus atmophyticus (Soil alga).